A 721-amino-acid polypeptide reads, in one-letter code: MTAKKQGAQASASAPSGDSPAERAQWLREELERYSYQYYVLDAPTIPDADYDALFIELQALEAEHPELLTPDSPTQRVGGAPLSAFDSVRHRVPMLSLNNGFEDEDVINFDRRCAQGLGRATAAAPAAFATPAAPADDLFSAADAAEAAANTAGNAVEYACELKFDGLAMSLRYENGTLVQAATRGDGETGEDVTANVRTIKAIPLKLRGTAPSVLEVRGEVFMYRADFDKLNARQAESGEKTFVNPRNAAAGSLRQLDPRITAKRPLSFFAYGVGEMEGFDRPGTHSAMLDGFAKLGLPVCDERRVVRGAQGLLSFHREVGERRDQLPYDIDGVVYKVNAIAEQEQLGFVSRAPRFALAHKFPAQEMTTTVEDIEVQVGRTGAITPVARLAPVFVGGVTVTNATLHNEDEIRRKDVHIGDTVIVRRAGDVIPEVVAVVLERRPADARAFVMPTECPVCGSHVERLEGEAIARCTGGLICAAQRKQALLHFAQRRAMDIEGLGDKVVEQLVDLGIVRTPADLYKLGVAKLAALDRMADKSASNLVAAIEQSRETTMNRFIFALGIRHVGEATAKDLAKHFGKLDNLLAADEAALLEVNDVGPVVAQSIANFIAEPHNVEVIEQLRAAGVHWAETEPTARAPLPLAGKTFVLTGTLPTMSREDAKEKLEAAGAKVAGSVSKKTDYVVAGAEAGSKLEKAQTLGVAVLDEEGMLKLLAEVGAA.

Over residues 1–19 (MTAKKQGAQASASAPSGDS) the composition is skewed to low complexity. Positions 1–23 (MTAKKQGAQASASAPSGDSPAER) are disordered. Residues 48–52 (DADYD), 97–98 (SL), and Glu162 each bind NAD(+). Lys164 serves as the catalytic N6-AMP-lysine intermediate. Residues Arg185, Glu221, Lys338, and Lys362 each contribute to the NAD(+) site. Residues Cys456, Cys459, Cys474, and Cys480 each contribute to the Zn(2+) site. One can recognise a BRCT domain in the interval 639 to 721 (RAPLPLAGKT…LKLLAEVGAA (83 aa)).

It belongs to the NAD-dependent DNA ligase family. LigA subfamily. Requires Mg(2+) as cofactor. The cofactor is Mn(2+).

The enzyme catalyses NAD(+) + (deoxyribonucleotide)n-3'-hydroxyl + 5'-phospho-(deoxyribonucleotide)m = (deoxyribonucleotide)n+m + AMP + beta-nicotinamide D-nucleotide.. In terms of biological role, DNA ligase that catalyzes the formation of phosphodiester linkages between 5'-phosphoryl and 3'-hydroxyl groups in double-stranded DNA using NAD as a coenzyme and as the energy source for the reaction. It is essential for DNA replication and repair of damaged DNA. This is DNA ligase from Cupriavidus metallidurans (strain ATCC 43123 / DSM 2839 / NBRC 102507 / CH34) (Ralstonia metallidurans).